Here is a 623-residue protein sequence, read N- to C-terminus: Chaperone protein HtpG (623 aa).

The interval 1–336 (MSMKGQETRG…SNDLPLNVSR (336 aa)) is a; substrate-binding. Residues 337–551 (EILQDSRVTQ…ADEMSTQMAK (215 aa)) form a b region. Positions 552–623 (LFAAAGQEAP…IRRMNKLLSA (72 aa)) are c.

The protein belongs to the heat shock protein 90 family. Homodimer.

The protein localises to the cytoplasm. In terms of biological role, molecular chaperone. Has ATPase activity. This is Chaperone protein HtpG from Serratia proteamaculans (strain 568).